The following is a 177-amino-acid chain: ATP-dependent protease subunit HslV (177 aa).

T7 is a catalytic residue. Residues G162, C165, and T168 each contribute to the Na(+) site.

This sequence belongs to the peptidase T1B family. HslV subfamily. In terms of assembly, a double ring-shaped homohexamer of HslV is capped on each side by a ring-shaped HslU homohexamer. The assembly of the HslU/HslV complex is dependent on binding of ATP.

Its subcellular location is the cytoplasm. It catalyses the reaction ATP-dependent cleavage of peptide bonds with broad specificity.. Its activity is regulated as follows. Allosterically activated by HslU binding. In terms of biological role, protease subunit of a proteasome-like degradation complex believed to be a general protein degrading machinery. In Persephonella marina (strain DSM 14350 / EX-H1), this protein is ATP-dependent protease subunit HslV.